Here is a 291-residue protein sequence, read N- to C-terminus: Probable xyloglucan endotransglucosylase/hydrolase protein 16 (291 aa).

The N-terminal stretch at Met1–Ser24 is a signal peptide. The GH16 domain maps to Gly25 to Tyr215. Glu101 acts as the Nucleophile in catalysis. Glu105 serves as the catalytic Proton donor. Glu105 provides a ligand contact to xyloglucan. Asn109 carries N-linked (GlcNAc...) asparagine glycosylation. Xyloglucan is bound by residues His118–Asn120, Asn128–Glu130, Asp194–Trp195, and Gly199. Cystine bridges form between Cys223–Cys232 and Cys272–Cys286. Xyloglucan is bound at residue Arg277.

The protein belongs to the glycosyl hydrolase 16 family. XTH group 2 subfamily. Post-translationally, contains at least one intrachain disulfide bond essential for its enzymatic activity.

The protein localises to the secreted. Its subcellular location is the cell wall. It is found in the extracellular space. It localises to the apoplast. The catalysed reaction is breaks a beta-(1-&gt;4) bond in the backbone of a xyloglucan and transfers the xyloglucanyl segment on to O-4 of the non-reducing terminal glucose residue of an acceptor, which can be a xyloglucan or an oligosaccharide of xyloglucan.. Its function is as follows. Catalyzes xyloglucan endohydrolysis (XEH) and/or endotransglycosylation (XET). Cleaves and religates xyloglucan polymers, an essential constituent of the primary cell wall, and thereby participates in cell wall construction of growing tissues. The chain is Probable xyloglucan endotransglucosylase/hydrolase protein 16 (XTH16) from Arabidopsis thaliana (Mouse-ear cress).